We begin with the raw amino-acid sequence, 318 residues long: Acetyl-coenzyme A carboxylase carboxyl transferase subunit alpha (318 aa).

Residues 38–292 (KLEKRLAKLE…NKTITKSLHA (255 aa)) enclose the CoA carboxyltransferase C-terminal domain.

The protein belongs to the AccA family. Acetyl-CoA carboxylase is a heterohexamer composed of biotin carboxyl carrier protein (AccB), biotin carboxylase (AccC) and two subunits each of ACCase subunit alpha (AccA) and ACCase subunit beta (AccD).

The protein resides in the cytoplasm. It carries out the reaction N(6)-carboxybiotinyl-L-lysyl-[protein] + acetyl-CoA = N(6)-biotinyl-L-lysyl-[protein] + malonyl-CoA. It participates in lipid metabolism; malonyl-CoA biosynthesis; malonyl-CoA from acetyl-CoA: step 1/1. Component of the acetyl coenzyme A carboxylase (ACC) complex. First, biotin carboxylase catalyzes the carboxylation of biotin on its carrier protein (BCCP) and then the CO(2) group is transferred by the carboxyltransferase to acetyl-CoA to form malonyl-CoA. This chain is Acetyl-coenzyme A carboxylase carboxyl transferase subunit alpha, found in Listeria monocytogenes serotype 4b (strain CLIP80459).